The sequence spans 504 residues: Arabinose import ATP-binding protein AraG (504 aa).

2 ABC transporter domains span residues 8-243 and 256-499; these read LSFR…MVGR and YGEE…MPKV. 40 to 47 lines the ATP pocket; it reads GENGAGKS.

It belongs to the ABC transporter superfamily. Arabinose importer (TC 3.A.1.2.2) family. In terms of assembly, the complex is composed of two ATP-binding proteins (AraG), two transmembrane proteins (AraH) and a solute-binding protein (AraF).

The protein localises to the cell inner membrane. The enzyme catalyses L-arabinose(out) + ATP + H2O = L-arabinose(in) + ADP + phosphate + H(+). Its function is as follows. Part of the ABC transporter complex AraFGH involved in arabinose import. Responsible for energy coupling to the transport system. In Shigella boydii serotype 4 (strain Sb227), this protein is Arabinose import ATP-binding protein AraG.